The sequence spans 193 residues: Xanthine phosphoribosyltransferase (193 aa).

Leucine 20 and threonine 27 together coordinate xanthine. 128-132 provides a ligand contact to 5-phospho-alpha-D-ribose 1-diphosphate; it reads ANGQA. Xanthine is bound at residue lysine 156.

The protein belongs to the purine/pyrimidine phosphoribosyltransferase family. Xpt subfamily. As to quaternary structure, homodimer.

The protein localises to the cytoplasm. The enzyme catalyses XMP + diphosphate = xanthine + 5-phospho-alpha-D-ribose 1-diphosphate. It functions in the pathway purine metabolism; XMP biosynthesis via salvage pathway; XMP from xanthine: step 1/1. Converts the preformed base xanthine, a product of nucleic acid breakdown, to xanthosine 5'-monophosphate (XMP), so it can be reused for RNA or DNA synthesis. This is Xanthine phosphoribosyltransferase from Streptococcus pneumoniae serotype 19F (strain G54).